A 396-amino-acid chain; its full sequence is Ribosomal RNA large subunit methyltransferase I (396 aa).

Residues 2–79 (AVRIKLKPGR…REEEIDREFF (78 aa)) enclose the PUA domain.

Belongs to the methyltransferase superfamily. RlmI family.

Its subcellular location is the cytoplasm. It catalyses the reaction cytidine(1962) in 23S rRNA + S-adenosyl-L-methionine = 5-methylcytidine(1962) in 23S rRNA + S-adenosyl-L-homocysteine + H(+). Specifically methylates the cytosine at position 1962 (m5C1962) of 23S rRNA. The protein is Ribosomal RNA large subunit methyltransferase I of Shewanella sp. (strain MR-7).